A 206-amino-acid polypeptide reads, in one-letter code: Ribosomal RNA large subunit methyltransferase E (206 aa).

Residues G60, W62, D80, D96, and D121 each contribute to the S-adenosyl-L-methionine site. K161 (proton acceptor) is an active-site residue.

It belongs to the class I-like SAM-binding methyltransferase superfamily. RNA methyltransferase RlmE family.

It localises to the cytoplasm. It carries out the reaction uridine(2552) in 23S rRNA + S-adenosyl-L-methionine = 2'-O-methyluridine(2552) in 23S rRNA + S-adenosyl-L-homocysteine + H(+). In terms of biological role, specifically methylates the uridine in position 2552 of 23S rRNA at the 2'-O position of the ribose in the fully assembled 50S ribosomal subunit. The protein is Ribosomal RNA large subunit methyltransferase E of Stutzerimonas stutzeri (strain A1501) (Pseudomonas stutzeri).